Here is a 785-residue protein sequence, read N- to C-terminus: Endonuclease MutS2 (785 aa).

An ATP-binding site is contributed by 334-341; the sequence is GPNTGGKT. The 76-residue stretch at 710–785 folds into the Smr domain; it reads LDLRGKRYEE…GNGATIVHFK (76 aa).

It belongs to the DNA mismatch repair MutS family. MutS2 subfamily. Homodimer. Binds to stalled ribosomes, contacting rRNA.

Its function is as follows. Endonuclease that is involved in the suppression of homologous recombination and thus may have a key role in the control of bacterial genetic diversity. Acts as a ribosome collision sensor, splitting the ribosome into its 2 subunits. Detects stalled/collided 70S ribosomes which it binds and splits by an ATP-hydrolysis driven conformational change. Acts upstream of the ribosome quality control system (RQC), a ribosome-associated complex that mediates the extraction of incompletely synthesized nascent chains from stalled ribosomes and their subsequent degradation. Probably generates substrates for RQC. This chain is Endonuclease MutS2, found in Pediococcus pentosaceus (strain ATCC 25745 / CCUG 21536 / LMG 10740 / 183-1w).